Reading from the N-terminus, the 189-residue chain is Nucleolar protein 16 (189 aa).

Positions 1 to 33 (MARDVKKRGKPAYTNRRNRQKYLKKKDNKKKLS) are enriched in basic residues. A disordered region spans residues 1–34 (MARDVKKRGKPAYTNRRNRQKYLKKKDNKKKLSK).

Belongs to the NOP16 family.

The protein resides in the nucleus. It is found in the nucleolus. The polypeptide is Nucleolar protein 16 (Caenorhabditis elegans).